The following is a 470-amino-acid chain: 3-isopropylmalate dehydratase large subunit (470 aa).

[4Fe-4S] cluster contacts are provided by Cys-351, Cys-411, and Cys-414.

The protein belongs to the aconitase/IPM isomerase family. LeuC type 1 subfamily. In terms of assembly, heterodimer of LeuC and LeuD. [4Fe-4S] cluster is required as a cofactor.

It catalyses the reaction (2R,3S)-3-isopropylmalate = (2S)-2-isopropylmalate. The protein operates within amino-acid biosynthesis; L-leucine biosynthesis; L-leucine from 3-methyl-2-oxobutanoate: step 2/4. Catalyzes the isomerization between 2-isopropylmalate and 3-isopropylmalate, via the formation of 2-isopropylmaleate. The chain is 3-isopropylmalate dehydratase large subunit from Shewanella frigidimarina (strain NCIMB 400).